We begin with the raw amino-acid sequence, 284 residues long: Polyamine aminopropyltransferase (284 aa).

Positions 2–237 constitute a PABS domain; that stretch reads ELWYTEQHTE…GHWLFGFASK (236 aa). Gln31 contacts S-methyl-5'-thioadenosine. Positions 62 and 86 each coordinate spermidine. Residues Glu106 and 137–138 contribute to the S-methyl-5'-thioadenosine site; that span reads DG. Asp155 functions as the Proton acceptor in the catalytic mechanism. 155–158 contacts spermidine; sequence DSTD. Pro162 provides a ligand contact to S-methyl-5'-thioadenosine.

It belongs to the spermidine/spermine synthase family. Homodimer or homotetramer.

It localises to the cytoplasm. The catalysed reaction is S-adenosyl 3-(methylsulfanyl)propylamine + putrescine = S-methyl-5'-thioadenosine + spermidine + H(+). The protein operates within amine and polyamine biosynthesis; spermidine biosynthesis; spermidine from putrescine: step 1/1. Its function is as follows. Catalyzes the irreversible transfer of a propylamine group from the amino donor S-adenosylmethioninamine (decarboxy-AdoMet) to putrescine (1,4-diaminobutane) to yield spermidine. The chain is Polyamine aminopropyltransferase from Alkaliphilus oremlandii (strain OhILAs) (Clostridium oremlandii (strain OhILAs)).